We begin with the raw amino-acid sequence, 250 residues long: 5'-nucleotidase SurE (250 aa).

The a divalent metal cation site is built by D8, D9, S40, and N94.

It belongs to the SurE nucleotidase family. It depends on a divalent metal cation as a cofactor.

The protein resides in the cytoplasm. It catalyses the reaction a ribonucleoside 5'-phosphate + H2O = a ribonucleoside + phosphate. Functionally, nucleotidase that shows phosphatase activity on nucleoside 5'-monophosphates. In Wolbachia sp. subsp. Drosophila simulans (strain wRi), this protein is 5'-nucleotidase SurE.